The following is a 121-amino-acid chain: Large ribosomal subunit protein uL18 (121 aa).

The protein belongs to the universal ribosomal protein uL18 family. As to quaternary structure, part of the 50S ribosomal subunit; part of the 5S rRNA/L5/L18/L25 subcomplex. Contacts the 5S and 23S rRNAs.

In terms of biological role, this is one of the proteins that bind and probably mediate the attachment of the 5S RNA into the large ribosomal subunit, where it forms part of the central protuberance. In Verminephrobacter eiseniae (strain EF01-2), this protein is Large ribosomal subunit protein uL18.